A 738-amino-acid chain; its full sequence is Protein Aster-B (738 aa).

Residues 1-81 (MKGFKLSCTA…SGGKNSKKSQ (81 aa)) form a disordered region. Over residues 8 to 19 (CTASNSNRSTPA) the composition is skewed to polar residues. S28 and S30 each carry phosphoserine. Basic and acidic residues predominate over residues 41–51 (MVEKGSDHSSD). A compositionally biased stretch (low complexity) spans 59–70 (QGVQRSCSSQSG). Positions 96 to 163 (EDFRKLFKQL…KDICSMTKEK (68 aa)) constitute a GRAM domain. The interval 254–301 (EENEVNDSSSKSSIETKPDASPQLPKKSITNSTLTSTGSSEAPVSFDG) is disordered. A compositionally biased stretch (polar residues) spans 259 to 268 (NDSSSKSSIE). Residue S274 is modified to Phosphoserine. Polar residues predominate over residues 281 to 295 (SITNSTLTSTGSSEA). In terms of domain architecture, VASt spans 372–543 (SGRQYVNEVF…ELAKTESTYL (172 aa)). Y389 bears the Phosphotyrosine mark. The interval 544 to 566 (AEMHRQSPKEKASKTTTVRRRKR) is disordered. Basic and acidic residues predominate over residues 545–556 (EMHRQSPKEKAS). Residues S550 and S581 each carry the phosphoserine modification. Phosphothreonine occurs at positions 584, 585, and 587. A helical transmembrane segment spans residues 623–643 (LLLVISCVICFSLVLLVILNM).

The protein localises to the endoplasmic reticulum membrane. Its subcellular location is the cell membrane. Its function is as follows. Cholesterol transporter that mediates non-vesicular transport of cholesterol from the plasma membrane (PM) to the endoplasmic reticulum (ER). Contains unique domains for binding cholesterol and the PM, thereby serving as a molecular bridge for the transfer of cholesterol from the PM to the ER. Plays a crucial role in cholesterol homeostasis in the adrenal gland and has the unique ability to localize to the PM based on the level of membrane cholesterol. In lipid-poor conditions localizes to the ER membrane and in response to excess cholesterol in the PM is recruited to the endoplasmic reticulum-plasma membrane contact sites (EPCS) which is mediated by the GRAM domain. At the EPCS, the sterol-binding VASt/ASTER domain binds to the cholesterol in the PM and facilitates its transfer from the PM to ER. The polypeptide is Protein Aster-B (GRAMD1B) (Homo sapiens (Human)).